The sequence spans 147 residues: Transcriptional regulator MraZ (147 aa).

2 SpoVT-AbrB domains span residues 5-50 (AVAL…PLTA) and 79-122 (AQEE…SDAG).

The protein belongs to the MraZ family. In terms of assembly, forms oligomers.

It is found in the cytoplasm. It localises to the nucleoid. The sequence is that of Transcriptional regulator MraZ from Azoarcus sp. (strain BH72).